The following is a 361-amino-acid chain: Hydroxycarboxylate dehydrogenase B (361 aa).

Residues histidine 48, 122–124, 178–182, histidine 234, asparagine 270, and 313–316 contribute to the NAD(+) site; these read GRI, LLDYA, and GEWE.

The protein belongs to the LDH2/MDH2 oxidoreductase family.

The enzyme catalyses 2-hydroxyglutarate + NADP(+) = 2-oxoglutarate + NADPH + H(+). It carries out the reaction 2-hydroxyglutarate + NAD(+) = 2-oxoglutarate + NADH + H(+). It catalyses the reaction 3-phenyllactate + NADP(+) = 3-phenylpyruvate + NADPH + H(+). The catalysed reaction is 3-phenyllactate + NAD(+) = 3-phenylpyruvate + NADH + H(+). The enzyme catalyses (2R)-2-hydroxy-3-(4-hydroxyphenyl)propanoate + NAD(+) = 3-(4-hydroxyphenyl)pyruvate + NADH + H(+). It carries out the reaction (2R)-2-hydroxy-3-(4-hydroxyphenyl)propanoate + NADP(+) = 3-(4-hydroxyphenyl)pyruvate + NADPH + H(+). It catalyses the reaction (2R)-3-(3,4-dihydroxyphenyl)lactate + NADP(+) = 3-(3,4-dihydroxyphenyl)pyruvate + NADPH + H(+). The catalysed reaction is (2R)-3-(3,4-dihydroxyphenyl)lactate + NAD(+) = 3-(3,4-dihydroxyphenyl)pyruvate + NADH + H(+). In terms of biological role, catalyzes the NAD(P)H-dependent reduction of 2-oxoglutarate, phenylpyruvate and (4-hydroxyphenyl)pyruvate, leading to the respective 2-hydroxycarboxylate in vitro. Shows a preference for NADPH over NADH as a redox partner. Do not catalyze the reverse reactions. The sequence is that of Hydroxycarboxylate dehydrogenase B from Escherichia coli (strain K12).